Consider the following 478-residue polypeptide: MARKTLRARRFFSLIFPFFFITSVYAEQTPVSAKTVTVEAKNETFAPQHPDQYQSWKATSEQSAREDALAEDPRLVILWAGYPFSRDYNKPRGHAYAVTDVRETLRTGAPKTAEDGPLPMACWSCKSPDVARLIQQEGEDGYFHGKWARGGPEIVNDLGCADCHNTASDDFAQGKPALTLSRPYAERAMEAIGKPFDKAGRFDQQSMVCGQCHVEYYFDGKNKAVKFPWDEGMKVENMEQYYDAIAFSDWTNSLSKTPMLKAQHPEYETWSAGIHGKNNVTCIDCHMPKVQNAEGKLYTDHKIGNPFDNFAQTCANCHTQDKASLQKVVAERKQAIHDLKIKVEDQLVHAHFEAKAAWDAGATDAEMKPILNDIRHAQWRWDLAIASHGIHMHAPEEGLRMLGSAMDKAADARTKLARLLATKGITHEIPLPDISTKEKAQKAIGLNMQQINAEKQDFLKTVVPQWEDQARKNGLLSQ.

The N-terminal stretch at 1-26 (MARKTLRARRFFSLIFPFFFITSVYA) is a signal peptide. Histidine 94 contacts heme c. The heme site is built by cysteine 122, cysteine 125, and lysine 126. Residues cysteine 160, cysteine 163, histidine 164, cysteine 209, cysteine 212, and histidine 213 each contribute to the heme c site. Ca(2+)-binding residues include glutamate 215, tyrosine 216, lysine 261, and glutamine 263. Tyrosine 216 lines the substrate pocket. A substrate-binding site is contributed by histidine 264. Heme c is bound by residues histidine 275, cysteine 282, cysteine 285, histidine 286, histidine 301, cysteine 314, cysteine 317, histidine 318, and histidine 393.

Belongs to the cytochrome c-552 family. Ca(2+) serves as cofactor. Requires heme c as cofactor.

The protein localises to the periplasm. It catalyses the reaction 6 Fe(III)-[cytochrome c] + NH4(+) + 2 H2O = 6 Fe(II)-[cytochrome c] + nitrite + 8 H(+). It functions in the pathway nitrogen metabolism; nitrate reduction (assimilation). Catalyzes the reduction of nitrite to ammonia, consuming six electrons in the process. In Salmonella schwarzengrund (strain CVM19633), this protein is Cytochrome c-552.